Reading from the N-terminus, the 178-residue chain is MPNPVLLYCLVLLAGMGTSQGENTQSEETCTHFPGGLPHMLRELRAAFGRVKIFFQTKDQLDDMLLSESLLEDFKGYLGCQALSEMIQFYLVEVMPQAENHSPDVKEHVNSLGEKLKTLRLRLRRCHRFLPCENKSKAVQQVKDAFSKLQEKGIYKAMSEFDIFINYIEAYMTAKINS.

The N-terminal stretch at 1 to 18 (MPNPVLLYCLVLLAGMGT) is a signal peptide. Cystine bridges form between C30–C126 and C80–C132. Residue N134 is glycosylated (N-linked (GlcNAc...) asparagine).

This sequence belongs to the IL-10 family. In terms of assembly, homodimer. Interacts with IL10RA and IL10RB.

Its subcellular location is the secreted. In terms of biological role, major immune regulatory cytokine that acts on many cells of the immune system where it has profound anti-inflammatory functions, limiting excessive tissue disruption caused by inflammation. Mechanistically, IL10 binds to its heterotetrameric receptor comprising IL10RA and IL10RB leading to JAK1 and STAT2-mediated phosphorylation of STAT3. In turn, STAT3 translocates to the nucleus where it drives expression of anti-inflammatory mediators. Targets antigen-presenting cells (APCs) such as macrophages and monocytes and inhibits their release of pro-inflammatory cytokines including granulocyte-macrophage colony-stimulating factor /GM-CSF, granulocyte colony-stimulating factor/G-CSF, IL-1 alpha, IL-1 beta, IL-6, IL-8 and TNF-alpha. Also interferes with antigen presentation by reducing the expression of MHC-class II and co-stimulatory molecules, thereby inhibiting their ability to induce T cell activation. In addition, controls the inflammatory response of macrophages by reprogramming essential metabolic pathways including mTOR signaling. This chain is Interleukin-10 (IL10), found in Marmota monax (Woodchuck).